A 206-amino-acid polypeptide reads, in one-letter code: Ribosomal RNA large subunit methyltransferase E (206 aa).

Gly60, Trp62, Asp80, Asp96, and Asp121 together coordinate S-adenosyl-L-methionine. Lys161 serves as the catalytic Proton acceptor.

It belongs to the class I-like SAM-binding methyltransferase superfamily. RNA methyltransferase RlmE family.

The protein localises to the cytoplasm. The enzyme catalyses uridine(2552) in 23S rRNA + S-adenosyl-L-methionine = 2'-O-methyluridine(2552) in 23S rRNA + S-adenosyl-L-homocysteine + H(+). Its function is as follows. Specifically methylates the uridine in position 2552 of 23S rRNA at the 2'-O position of the ribose in the fully assembled 50S ribosomal subunit. The protein is Ribosomal RNA large subunit methyltransferase E of Francisella tularensis subsp. tularensis (strain FSC 198).